The chain runs to 531 residues: Tryptophan biosynthesis protein TRP1 (531 aa).

An indole-3-glycerol phosphate synthase region spans residues 1–254; that stretch reads MGNILEEIAA…TVKDLLQNVT (254 aa). The tract at residues 255 to 531 is N-(5'-phosphoribosyl)anthranilate isomerase; it reads RHSESGEFAL…TLKIDEETEN (277 aa).

The protein in the N-terminal section; belongs to the TrpC family. In the C-terminal section; belongs to the TrpF family.

The enzyme catalyses N-(5-phospho-beta-D-ribosyl)anthranilate = 1-(2-carboxyphenylamino)-1-deoxy-D-ribulose 5-phosphate. It catalyses the reaction 1-(2-carboxyphenylamino)-1-deoxy-D-ribulose 5-phosphate + H(+) = (1S,2R)-1-C-(indol-3-yl)glycerol 3-phosphate + CO2 + H2O. Its pathway is amino-acid biosynthesis; L-tryptophan biosynthesis; L-tryptophan from chorismate: step 3/5. It functions in the pathway amino-acid biosynthesis; L-tryptophan biosynthesis; L-tryptophan from chorismate: step 4/5. In terms of biological role, bifunctional enzyme that catalyzes two sequential steps of tryptophan biosynthetic pathway. The sequence is that of Tryptophan biosynthesis protein TRP1 (TRP1) from Phytophthora nicotianae (Potato buckeye rot agent).